The sequence spans 211 residues: UPF0319 protein VC_A0026 (211 aa).

Residues 1–21 (MKPMQRLTCLLALCFAASASA) form the signal peptide.

The protein belongs to the UPF0319 family.

The chain is UPF0319 protein VC_A0026 from Vibrio cholerae serotype O1 (strain ATCC 39315 / El Tor Inaba N16961).